The following is a 1035-amino-acid chain: Kinesin-like protein KIN-4A (1035 aa).

Residues 11–370 (SVKVAVHIRP…LKYANRARNI (360 aa)) enclose the Kinesin motor domain. 90 to 97 (GQTGSGKT) serves as a coordination point for ATP. Coiled-coil stretches lie at residues 408-436 (CAEV…HEYR), 504-707 (QNSM…RKSS), and 881-911 (KEIV…IATS). The tract at residues 704–724 (RKSSPREHSAGTNGFGTNGQT) is disordered.

Belongs to the TRAFAC class myosin-kinesin ATPase superfamily. Kinesin family. KIN-4 subfamily. In terms of assembly, homodimer. Expressed in stems and flowers. Detected in cells undergoing secondary wall deposition including developing interfascicular fibers and xylem cells, but also in dividing cells and expanding/elongating parenchyma cells.

The protein localises to the cytoplasm. The protein resides in the cytoskeleton. Its function is as follows. Kinesin-like motor protein involved in the control of the oriented deposition of cellulose microfibrils. Its motor activity is directed toward the microtubule's plus end. It possesses the potential to drive long-distance transport of cargo along cortical microtubules. Regulates cell wall mechanics during cell elongation, by the regulation of primary and secondary walls deposition. Contributes to cortical microtubule-mediated trafficking of cell wall components. This Arabidopsis thaliana (Mouse-ear cress) protein is Kinesin-like protein KIN-4A.